Reading from the N-terminus, the 454-residue chain is UPF0210 protein BLA_0552 (454 aa).

The protein belongs to the UPF0210 family. In terms of assembly, homodimer.

The chain is UPF0210 protein BLA_0552 from Bifidobacterium animalis subsp. lactis (strain AD011).